The chain runs to 215 residues: Pyridoxine/pyridoxamine 5'-phosphate oxidase (215 aa).

Substrate is bound by residues Arg-9–Tyr-12 and Lys-69. FMN contacts are provided by residues Arg-64 to Lys-69, Phe-79 to Thr-80, Lys-86, and Gln-108. Positions 126, 130, and 134 each coordinate substrate. Residues Gln-143 to Ser-144 and Trp-188 each bind FMN. Arg-194–His-196 is a substrate binding site. Arg-198 contributes to the FMN binding site.

The protein belongs to the pyridoxamine 5'-phosphate oxidase family. In terms of assembly, homodimer. Requires FMN as cofactor.

It catalyses the reaction pyridoxamine 5'-phosphate + O2 + H2O = pyridoxal 5'-phosphate + H2O2 + NH4(+). The catalysed reaction is pyridoxine 5'-phosphate + O2 = pyridoxal 5'-phosphate + H2O2. It functions in the pathway cofactor metabolism; pyridoxal 5'-phosphate salvage; pyridoxal 5'-phosphate from pyridoxamine 5'-phosphate: step 1/1. It participates in cofactor metabolism; pyridoxal 5'-phosphate salvage; pyridoxal 5'-phosphate from pyridoxine 5'-phosphate: step 1/1. In terms of biological role, catalyzes the oxidation of either pyridoxine 5'-phosphate (PNP) or pyridoxamine 5'-phosphate (PMP) into pyridoxal 5'-phosphate (PLP). The protein is Pyridoxine/pyridoxamine 5'-phosphate oxidase of Pseudomonas fluorescens (strain SBW25).